Reading from the N-terminus, the 168-residue chain is Cell division inhibitor SulA (168 aa).

A ftsZ binding region spans residues Ala105 to Tyr111.

Belongs to the SulA family. As to quaternary structure, interacts with FtsZ. Post-translationally, is rapidly cleaved and degraded by the Lon protease once DNA damage is repaired.

In terms of biological role, component of the SOS system and an inhibitor of cell division. Accumulation of SulA causes rapid cessation of cell division and the appearance of long, non-septate filaments. In the presence of GTP, binds a polymerization-competent form of FtsZ in a 1:1 ratio, thus inhibiting FtsZ polymerization and therefore preventing it from participating in the assembly of the Z ring. This mechanism prevents the premature segregation of damaged DNA to daughter cells during cell division. The polypeptide is Cell division inhibitor SulA (Erwinia pyrifoliae (strain DSM 12163 / CIP 106111 / Ep16/96)).